Reading from the N-terminus, the 247-residue chain is Mannose-P-dolichol utilization defect 1 protein (247 aa).

Ala-2 is modified (N-acetylalanine). A run of 7 helical transmembrane segments spans residues 37-57 (CLKILLSKGLGLGIVAGSLLV), 74-94 (LSLQSVMLELVALTGTVVYSI), 100-120 (FSSWGEALFLTLQTVAICFLV), 128-145 (VKGVAFLACYAMVLLALL), 151-171 (LAVVTLLQASNVPAVVVGKLL), 185-205 (LSAITVFMLFGGSLARIFTSV), and 213-233 (MAGVFVVSSLCNGLIAAQVLF). The PQ-loop 1 domain maps to 39 to 105 (KILLSKGLGL…NNFPFSSWGE (67 aa)). The PQ-loop 2 domain occupies 159–216 (ASNVPAVVVGKLLQAATNYRNGHTGQLSAITVFMLFGGSLARIFTSVQETGDPLMAGV).

Belongs to the MPDU1 (TC 2.A.43.3) family.

It is found in the membrane. Required for normal utilization of mannose-dolichol phosphate (Dol-P-Man) in the synthesis of N-linked and O-linked oligosaccharides and GPI anchors. This Mus musculus (Mouse) protein is Mannose-P-dolichol utilization defect 1 protein (Mpdu1).